Reading from the N-terminus, the 569-residue chain is Peroxynitrite isomerase THAP4 (569 aa).

A THAP-type zinc finger spans residues 1-85; that stretch reads MVICCAAVNC…LKPTAVPSIF (85 aa). The segment at 88–216 is disordered; sequence SEKKRGAGGH…DKSGISMDDF (129 aa). 2 stretches are compositionally biased toward polar residues: residues 121–130 and 157–167; these read IGSSLSSSDN and AVSQEQGQSLE. Ser-159 carries the post-translational modification Phosphoserine. The HCFC1-binding motif (HBM) motif lies at 230–233; sequence LHSY. Position 234 is a phosphoserine (Ser-234). Residues 235 to 312 form a disordered region; it reads FSSKHTRERP…EAVQSEHSDA (78 aa). The segment covering 242-262 has biased composition (basic and acidic residues); it reads ERPSVPREPMDRKRLKREMEP. Residues 265–279 are compositionally biased toward polar residues; the sequence is SGNSVAQSPPSSSLT. Over residues 280 to 289 the composition is skewed to low complexity; sequence ATPQKASQSP. The nitrobindin stretch occupies residues 407–569; that stretch reads PPKLNPVVEP…LHITYKKVTP (163 aa). Thr-436 and His-559 together coordinate heme b.

The protein in the C-terminal section; belongs to the nitrobindin family. As to quaternary structure, homodimer. The cofactor is heme b.

Its subcellular location is the cytoplasm. It is found in the nucleus. It carries out the reaction peroxynitrite = nitrate. It functions in the pathway nitrogen metabolism. Its function is as follows. Heme-binding protein able to scavenge peroxynitrite and to protect free L-tyrosine against peroxynitrite-mediated nitration, by acting as a peroxynitrite isomerase that converts peroxynitrite to nitrate. Therefore, this protein likely plays a role in peroxynitrite sensing and in the detoxification of reactive nitrogen and oxygen species (RNS and ROS, respectively). Is able to bind nitric oxide (NO) in vitro, but may act as a sensor of peroxynitrite levels in vivo, possibly modulating the transcriptional activity residing in the N-terminal region. In Mus musculus (Mouse), this protein is Peroxynitrite isomerase THAP4.